A 358-amino-acid chain; its full sequence is Protein-glutamate methylesterase/protein-glutamine glutaminase 1 (358 aa).

One can recognise a Response regulatory domain in the interval 7–124 (SVLLVDDSAV…KNFLIDSAAE (118 aa)). Residue Asp-58 is modified to 4-aspartylphosphate. In terms of domain architecture, CheB-type methylesterase spans 170–358 (AQTTERIVAI…QEIHQAILHR (189 aa)). Active-site residues include Ser-182, His-208, and Asp-304.

It belongs to the CheB family. In terms of processing, phosphorylated by CheA. Phosphorylation of the N-terminal regulatory domain activates the methylesterase activity.

It is found in the cytoplasm. The catalysed reaction is [protein]-L-glutamate 5-O-methyl ester + H2O = L-glutamyl-[protein] + methanol + H(+). The enzyme catalyses L-glutaminyl-[protein] + H2O = L-glutamyl-[protein] + NH4(+). Functionally, involved in chemotaxis. Part of a chemotaxis signal transduction system that modulates chemotaxis in response to various stimuli. Catalyzes the demethylation of specific methylglutamate residues introduced into the chemoreceptors (methyl-accepting chemotaxis proteins or MCP) by CheR. Also mediates the irreversible deamidation of specific glutamine residues to glutamic acid. The chain is Protein-glutamate methylesterase/protein-glutamine glutaminase 1 from Pseudomonas savastanoi pv. phaseolicola (strain 1448A / Race 6) (Pseudomonas syringae pv. phaseolicola (strain 1448A / Race 6)).